We begin with the raw amino-acid sequence, 377 residues long: Alanine racemase (377 aa).

The active-site Proton acceptor; specific for D-alanine is the Lys37. Lys37 is modified (N6-(pyridoxal phosphate)lysine). Arg135 contributes to the substrate binding site. Tyr271 serves as the catalytic Proton acceptor; specific for L-alanine. Met319 serves as a coordination point for substrate.

It belongs to the alanine racemase family. Requires pyridoxal 5'-phosphate as cofactor.

It catalyses the reaction L-alanine = D-alanine. The protein operates within amino-acid biosynthesis; D-alanine biosynthesis; D-alanine from L-alanine: step 1/1. Its function is as follows. Catalyzes the interconversion of L-alanine and D-alanine. May also act on other amino acids. The polypeptide is Alanine racemase (alr) (Helicobacter pylori (strain Shi470)).